Here is a 76-residue protein sequence, read N- to C-terminus: Acyl carrier protein (76 aa).

The region spanning 1 to 76 is the Carrier domain; sequence MATFDDVKDV…AAVDYIDNNQ (76 aa). Ser-36 is modified (O-(pantetheine 4'-phosphoryl)serine).

This sequence belongs to the acyl carrier protein (ACP) family. 4'-phosphopantetheine is transferred from CoA to a specific serine of apo-ACP by AcpS. This modification is essential for activity because fatty acids are bound in thioester linkage to the sulfhydryl of the prosthetic group.

The protein localises to the cytoplasm. The protein operates within lipid metabolism; fatty acid biosynthesis. Carrier of the growing fatty acid chain in fatty acid biosynthesis. The chain is Acyl carrier protein from Deinococcus radiodurans (strain ATCC 13939 / DSM 20539 / JCM 16871 / CCUG 27074 / LMG 4051 / NBRC 15346 / NCIMB 9279 / VKM B-1422 / R1).